A 39-amino-acid polypeptide reads, in one-letter code: Natriuretic peptide CnNP-b (39 aa).

Positions 1–8 (SGSKTATK) are excised as a propeptide. A disulfide bond links Cys12 and Cys28. Residues 20 to 39 (IGSTSGMGCGGVPKPTPGGS) are disordered.

It belongs to the natriuretic peptide family. In terms of tissue distribution, expressed by the venom gland.

The protein resides in the secreted. In terms of biological role, snake venom natriuretic peptide that targets both NPR1 and NPR2. Exhibits hypotensive and vasodepressor activities. The polypeptide is Natriuretic peptide CnNP-b (Cryptophis nigrescens (Eastern small-eyed snake)).